The primary structure comprises 426 residues: Glutamate-1-semialdehyde 2,1-aminomutase (426 aa).

Lysine 265 is subject to N6-(pyridoxal phosphate)lysine.

The protein belongs to the class-III pyridoxal-phosphate-dependent aminotransferase family. HemL subfamily. In terms of assembly, homodimer. It depends on pyridoxal 5'-phosphate as a cofactor.

The protein resides in the cytoplasm. The enzyme catalyses (S)-4-amino-5-oxopentanoate = 5-aminolevulinate. The protein operates within porphyrin-containing compound metabolism; protoporphyrin-IX biosynthesis; 5-aminolevulinate from L-glutamyl-tRNA(Glu): step 2/2. This Salmonella gallinarum (strain 287/91 / NCTC 13346) protein is Glutamate-1-semialdehyde 2,1-aminomutase.